A 441-amino-acid polypeptide reads, in one-letter code: Tol-Pal system protein TolB (441 aa).

A signal peptide spans 1–25 (MRIFFFAYVLPTVISLLLGCQGAIA).

The protein belongs to the TolB family. The Tol-Pal system is composed of five core proteins: the inner membrane proteins TolA, TolQ and TolR, the periplasmic protein TolB and the outer membrane protein Pal. They form a network linking the inner and outer membranes and the peptidoglycan layer.

It localises to the periplasm. Its function is as follows. Part of the Tol-Pal system, which plays a role in outer membrane invagination during cell division and is important for maintaining outer membrane integrity. This Anaplasma marginale (strain St. Maries) protein is Tol-Pal system protein TolB.